A 180-amino-acid chain; its full sequence is UPF0227 protein Ent638_1623 (180 aa).

It belongs to the UPF0227 family.

This Enterobacter sp. (strain 638) protein is UPF0227 protein Ent638_1623.